Consider the following 150-residue polypeptide: uncharacterized protein (150 aa).

This is an uncharacterized protein from Acidianus filamentous virus 1 (isolate United States/Yellowstone) (AFV-1).